The sequence spans 154 residues: uncharacterized protein (154 aa).

The next 2 helical transmembrane spans lie at 19-39 and 51-71; these read LFAY…GLLL and ADQV…LLFA.

It localises to the cell membrane. This is an uncharacterized protein from Mycobacterium tuberculosis (strain CDC 1551 / Oshkosh).